A 263-amino-acid polypeptide reads, in one-letter code: 3-methyl-2-oxobutanoate hydroxymethyltransferase (263 aa).

Mg(2+)-binding residues include D43 and D82. 3-methyl-2-oxobutanoate is bound by residues 43 to 44, D82, and K111; that span reads DS. E113 provides a ligand contact to Mg(2+). E179 (proton acceptor) is an active-site residue.

It belongs to the PanB family. As to quaternary structure, homodecamer; pentamer of dimers. Mg(2+) is required as a cofactor.

Its subcellular location is the cytoplasm. It carries out the reaction 3-methyl-2-oxobutanoate + (6R)-5,10-methylene-5,6,7,8-tetrahydrofolate + H2O = 2-dehydropantoate + (6S)-5,6,7,8-tetrahydrofolate. It functions in the pathway cofactor biosynthesis; (R)-pantothenate biosynthesis; (R)-pantoate from 3-methyl-2-oxobutanoate: step 1/2. Its function is as follows. Catalyzes the reversible reaction in which hydroxymethyl group from 5,10-methylenetetrahydrofolate is transferred onto alpha-ketoisovalerate to form ketopantoate. In Neisseria meningitidis serogroup B (strain ATCC BAA-335 / MC58), this protein is 3-methyl-2-oxobutanoate hydroxymethyltransferase.